The following is a 387-amino-acid chain: Penicillopepsin-1 (387 aa).

An N-terminal signal peptide occupies residues 1–19; the sequence is MVNSKTVVSALALSALAAA. The propeptide at 20–66 is activation peptide; sequence APAPSSTTSFSINQVAVKKPAIHPAVKYAKALAKYHAEIPSNVASAA. A Peptidase A1 domain is found at 85-384; it reads YVTPITAGSS…DGDNLQLGFA (300 aa). Catalysis depends on residues Asp-101 and Asp-279. N-linked (GlcNAc...) asparagine glycosylation is present at Asn-304. A disulfide bridge links Cys-315 with Cys-347.

The protein belongs to the peptidase A1 family. Monomer.

It is found in the secreted. It catalyses the reaction Hydrolysis of proteins with broad specificity similar to that of pepsin A, preferring hydrophobic residues at P1 and P1', but also cleaving 20-Gly-|-Glu-21 in the B chain of insulin. Clots milk, and activates trypsinogen.. Secreted aspartic endopeptidase that allows assimilation of proteinaceous substrates. The scissile peptide bond is attacked by a nucleophilic water molecule activated by two aspartic residues in the active site. Shows a broad primary substrate specificity. Favors hydrophobic residues at the P1 and P1' positions, but can also activate trypsinogen and hydrolyze the B chain of insulin between positions 'Gly-20' and 'Glu-21'. This Talaromyces stipitatus (strain ATCC 10500 / CBS 375.48 / QM 6759 / NRRL 1006) (Penicillium stipitatum) protein is Penicillopepsin-1 (pepA).